A 486-amino-acid chain; its full sequence is Pentatricopeptide repeat-containing protein At3g06430, chloroplastic (486 aa).

The N-terminal 36 residues, 1–36 (MASMSLSFSSSLCSSRIPEGKRRFRHRDVGIVRCVL), are a transit peptide targeting the chloroplast. PPR repeat units lie at residues 123–157 (KEGT…GLEP), 158–188 (TVEL…MKSF), 194–228 (DVFT…LITP), 229–264 (NTVT…ACKP), 265–299 (DVWT…GIEP), 300–334 (ETRT…EFPW), 335–369 (TTST…GMKA), 370–404 (DTKT…EIPE), 405–439 (NTAF…QCVC), and 440–470 (DSRT…RQKL).

Belongs to the PPR family. P subfamily.

It localises to the plastid. The protein localises to the chloroplast. The polypeptide is Pentatricopeptide repeat-containing protein At3g06430, chloroplastic (EMB2750) (Arabidopsis thaliana (Mouse-ear cress)).